The chain runs to 779 residues: Ribosome-releasing factor 2, mitochondrial (779 aa).

Residues 68–353 (AKIRNIGIMA…AVTTYLPSPE (286 aa)) enclose the tr-type G domain. Residues 77–84 (AHIDAGKT), 141–145 (DTPGH), and 195–198 (NKMD) contribute to the GTP site.

It belongs to the TRAFAC class translation factor GTPase superfamily. Classic translation factor GTPase family. EF-G/EF-2 subfamily.

It localises to the mitochondrion. The enzyme catalyses GTP + H2O = GDP + phosphate + H(+). Mitochondrial GTPase that mediates the disassembly of ribosomes from messenger RNA at the termination of mitochondrial protein biosynthesis. Acts in collaboration with MRRF. GTP hydrolysis follows the ribosome disassembly and probably occurs on the ribosome large subunit. Not involved in the GTP-dependent ribosomal translocation step during translation elongation. This Rattus norvegicus (Rat) protein is Ribosome-releasing factor 2, mitochondrial (Gfm2).